The primary structure comprises 548 residues: MIINKFSLKWMLAIAVAIPAIALLFVAFTSLNTMSVMQAQSNSLYANTAAPMRAMAEATSRIPRMRVGIDMMLLQETALKDAKGVLKRVEEARTEDIPEMRQAMQVAVDSQVNPELKEQARKLQARFEQMVREELEPMLQAFANNDMTTAQNIYRDKYAPTYGEMRKQANQILDTLLQQAEQQNHASVESFEAGRTKQMVIIAAGLIISFITSLVIITNLRSRVAYLKDRMSSAAANLSLRTRLELDGNDELCDIGKSFNAFIDKVHHSIEEVAENSKELATMASSVSQRAHMTQSNCASQRDRTVQVATAIHELGATVSEIASNAAMAADVAKQATLHSGEGKKVVGEVQNRIQTLVNELDNATQVVSSLATQINGISSTLDTIRSISEQTNLLALNAAIEAARAGEQGRGFAVVADEVRTLASRSAASTEEIQQVINRLQTESTRAVEAMEKGRSQSDVVVEFSAKANQSLTEINSQIDQINDQNIQVATATEEQSTVVEDINRNVEDINQLTTETSHVADELSRASASLQRLSSQLDKLVGSFEL.

Topologically, residues 1–10 (MIINKFSLKW) are cytoplasmic. A helical transmembrane segment spans residues 11 to 31 (MLAIAVAIPAIALLFVAFTSL). Residues 32–199 (NTMSVMQAQS…SFEAGRTKQM (168 aa)) lie on the Periplasmic side of the membrane. Residues 200 to 220 (VIIAAGLIISFITSLVIITNL) traverse the membrane as a helical segment. The 54-residue stretch at 218–271 (TNLRSRVAYLKDRMSSAAANLSLRTRLELDGNDELCDIGKSFNAFIDKVHHSIE) folds into the HAMP domain. Topologically, residues 221–548 (RSRVAYLKDR…LDKLVGSFEL (328 aa)) are cytoplasmic. The Methyl-accepting transducer domain occupies 276–512 (NSKELATMAS…DINRNVEDIN (237 aa)).

It belongs to the methyl-accepting chemotaxis (MCP) protein family.

The protein localises to the cell inner membrane. Its function is as follows. Chemotactic-signal transducers respond to changes in the concentration of attractants and repellents in the environment, transduce a signal from the outside to the inside of the cell, and facilitate sensory adaptation through the variation of the level of methylation. This is Methyl-accepting chemotaxis protein HlyB (hlyB) from Vibrio cholerae serotype O1 (strain ATCC 39315 / El Tor Inaba N16961).